A 242-amino-acid polypeptide reads, in one-letter code: Phosphomannomutase 2 (242 aa).

Catalysis depends on Asp-8, which acts as the Nucleophile. Asp-8 and Asp-10 together coordinate Mg(2+). The Proton donor/acceptor role is filled by Asp-10. Residues Arg-17, Arg-119, Arg-130, and Arg-137 each contribute to the alpha-D-mannose 1-phosphate site. Lys-145 carries the N6-acetyllysine modification. Alpha-D-mannose 1-phosphate contacts are provided by Ser-175 and Asp-177. Mg(2+) contacts are provided by Asp-205, Phe-217, Asp-219, and Thr-222.

Belongs to the eukaryotic PMM family. As to quaternary structure, homodimer.

Its subcellular location is the cytoplasm. The enzyme catalyses alpha-D-mannose 1-phosphate = D-mannose 6-phosphate. Its pathway is nucleotide-sugar biosynthesis; GDP-alpha-D-mannose biosynthesis; alpha-D-mannose 1-phosphate from D-fructose 6-phosphate: step 2/2. In terms of biological role, involved in the synthesis of the GDP-mannose and dolichol-phosphate-mannose required for a number of critical mannosyl transfer reactions. The sequence is that of Phosphomannomutase 2 (Pmm2) from Mus musculus (Mouse).